A 759-amino-acid chain; its full sequence is Probable Na(+)/H(+) antiporter C3A11.09 (759 aa).

11 helical membrane-spanning segments follow: residues 12-32 (HLAY…SLII), 36-56 (LFLG…PYVA), 105-125 (MLLP…YALI), 133-153 (SLAI…SIVG), 172-192 (ESGC…YLII), 206-226 (IIIL…GVIA), 244-264 (FLVF…IIGV), 295-315 (VIDL…MPWP), 319-339 (MPHM…ILIA), 361-381 (ALFA…CLVA), and 415-435 (VVCF…AFFM). A Phosphothreonine modification is found at T442. S446 bears the Phosphoserine mark. Position 448 is a phosphothreonine (T448). 5 stretches are compositionally biased toward basic and acidic residues: residues 514–529 (LREE…HYDA), 537–547 (YESRQPRRSNE), 590–601 (IDEKLAQGDPKA), 622–647 (NLHE…ENHR), and 655–671 (SESH…RREQ). Disordered regions lie at residues 514–558 (LREE…NPGD), 578–606 (SHTS…SFGR), and 622–759 (NLHE…RAWE). Residues 696 to 713 (NENNESSSDTRNGLLSDN) show a composition bias toward polar residues. N-linked (GlcNAc...) asparagine glycosylation is found at N699 and N713. Over residues 724–733 (RAPSAAVSSE) the composition is skewed to low complexity. The residue at position 735 (S735) is a Phosphoserine.

It belongs to the fungal Na(+)/H(+) exchanger family.

The protein localises to the membrane. Functionally, sodium export from cell, takes up external protons in exchange for internal sodium ions. The chain is Probable Na(+)/H(+) antiporter C3A11.09 (sod22) from Schizosaccharomyces pombe (strain 972 / ATCC 24843) (Fission yeast).